Here is a 287-residue protein sequence, read N- to C-terminus: 4-hydroxybenzoate octaprenyltransferase (287 aa).

Transmembrane regions (helical) follow at residues 23–40 (IGSL…WLAG), 98–118 (ILFV…NKMT), 141–161 (LPQF…YAAV), 163–183 (ESLP…TVAY), 213–233 (IIIG…GNIT), and 235–255 (LGIP…YQQI).

This sequence belongs to the UbiA prenyltransferase family. Mg(2+) is required as a cofactor.

The protein localises to the cell inner membrane. It catalyses the reaction all-trans-octaprenyl diphosphate + 4-hydroxybenzoate = 4-hydroxy-3-(all-trans-octaprenyl)benzoate + diphosphate. The protein operates within cofactor biosynthesis; ubiquinone biosynthesis. In terms of biological role, catalyzes the prenylation of para-hydroxybenzoate (PHB) with an all-trans polyprenyl group. Mediates the second step in the final reaction sequence of ubiquinone-8 (UQ-8) biosynthesis, which is the condensation of the polyisoprenoid side chain with PHB, generating the first membrane-bound Q intermediate 3-octaprenyl-4-hydroxybenzoate. The sequence is that of 4-hydroxybenzoate octaprenyltransferase from Pectobacterium atrosepticum (strain SCRI 1043 / ATCC BAA-672) (Erwinia carotovora subsp. atroseptica).